The sequence spans 667 residues: MATVAPPADQATDLLQKLSLDSPAKASEIPEPNKKTAVYQYGGVDVHGQVPSYDRSLTPMLPSDAADPSVCYVPNPYNPYQYYNVYGSGQEWTDYPAYTNPEGVDMNSGIYGENGTVVYPQGYGYAAYPYSPATSPAPQLGGEGQLYGAQQYQYPNYFPNSGPYASSVATPTQPDLSANKPAGVKTLPADSNNVASAAGITKGSNGSAPVKPTNQATLNTSSNLYGMGAPGGGLAAGYQDPRYAYEGYYAPVPWHDGSKYSDVQRPVSGSGVASSYSKSSTVPSSRNQNYRSNSHYTSVHQPSSVTGYGTAQGYYNRMYQNKLYGQYGSTGRSALGYGSSGYDSRTNGRGWAATDNKYRSWGRGNSYYYGNENNVDGLNELNRGPRAKGTKNQKGNLDDSLEVKEQTGESNVTEVGEADNTCVVPDREQYNKEDFPVDYANAMFFIIKSYSEDDVHKSIKYNVWASTPNGNKKLAAAYQEAQQKAGGCPIFLFFSVNASGQFVGLAEMTGPVDFNTNVEYWQQDKWTGSFPLKWHIVKDVPNSLLKHITLENNENKPVTNSRDTQEVKLEQGLKIVKIFKEHSSKTCILDDFSFYEVRQKTILEKKAKQTQKQVSEEKVTDEKKESATAESASKESPAAVQTSSDVKVAENGSVAKPVTGDVVANGC.

Disordered regions lie at residues 264 to 305 (QRPV…PSSV) and 379 to 398 (NELN…GNLD). The span at 267–285 (VSGSGVASSYSKSSTVPSS) shows a compositional bias: low complexity. The span at 286–305 (RNQNYRSNSHYTSVHQPSSV) shows a compositional bias: polar residues. Positions 442-579 (AMFFIIKSYS…EQGLKIVKIF (138 aa)) constitute a YTH domain. Residues 448 to 450 (KSY), Asp454, 464 to 465 (WA), Asn497, Trp521, Trp526, and Trp534 each bind RNA. The disordered stretch occupies residues 606 to 667 (KAKQTQKQVS…VTGDVVANGC (62 aa)). Basic and acidic residues predominate over residues 614–627 (VSEEKVTDEKKESA). Residues 628–639 (TAESASKESPAA) show a composition bias toward low complexity.

In terms of assembly, interacts (via C-terminus) with CIPK1. Expressed in the shoot apex, at the sites of leaf formation, and in emerging leaves. Highly expressed in rapidly developing tissues.

It is found in the cytoplasm. The protein resides in the nucleus. In terms of biological role, specifically recognizes and binds N6-methyladenosine (m6A)-containing RNAs, and regulates mRNA stability. M6A is a modification present at internal sites of mRNAs and some non-coding RNAs and plays a role in mRNA stability and processing. Binds preferentially in the 3'UTRs of target genes. May play dual roles in regulating 3'UTR processing in the nucleus and facilitating mRNA stability in the cytoplasm. Required for the correct timing of leaf formation and normal leaf morphology. Functions redundantly with ECT3. Required for proper trichome branching and morphology. Controls trichome morphology by binding transcripts related to trichome morphogenesis and affecting their stability. In Arabidopsis thaliana (Mouse-ear cress), this protein is YTH domain-containing protein ECT2.